A 192-amino-acid polypeptide reads, in one-letter code: MASRKQGAREGLWSMGVRLLTTLLCITSLILLLKAKQTVRRALGLGYIAQTVKYSDTSGFIYLVYINILVAAYGLIVFVSLIPSALGKSCSGKCSRWTIFVLDQVFAYVLLSAVSAATEVLYLADKGMSKTQWEALCPTYGFFCHMVSASVAIGSVAVVLLAVLSVSSAQSLFHNFYTRALYTTKMRHSSLT.

The Cytoplasmic portion of the chain corresponds to 1–11 (MASRKQGAREG). The chain crosses the membrane as a helical span at residues 12-32 (LWSMGVRLLTTLLCITSLILL). Over 33-58 (LKAKQTVRRALGLGYIAQTVKYSDTS) the chain is Extracellular. The chain crosses the membrane as a helical span at residues 59–79 (GFIYLVYINILVAAYGLIVFV). Topologically, residues 80–96 (SLIPSALGKSCSGKCSR) are cytoplasmic. Residues 97–117 (WTIFVLDQVFAYVLLSAVSAA) form a helical membrane-spanning segment. Over 118-145 (TEVLYLADKGMSKTQWEALCPTYGFFCH) the chain is Extracellular. The chain crosses the membrane as a helical span at residues 146–166 (MVSASVAIGSVAVVLLAVLSV). Topologically, residues 167-192 (SSAQSLFHNFYTRALYTTKMRHSSLT) are cytoplasmic.

This sequence belongs to the Casparian strip membrane proteins (CASP) family. As to quaternary structure, homodimer and heterodimers.

It is found in the cell membrane. The protein is CASP-like protein 2U1 of Adiantum capillus-veneris (Maidenhair fern).